Consider the following 132-residue polypeptide: Large-conductance mechanosensitive channel (132 aa).

The next 3 helical transmembrane spans lie at 14–34, 38–58, and 67–87; these read VVDLAVGVVIGAAFGKIVSSL, IITPLLGMVLGGVNFTDLHFG, and GNFIQTIFDFLIIAASIFMFI.

The protein belongs to the MscL family. Homopentamer.

It is found in the cell membrane. Its function is as follows. Channel that opens in response to stretch forces in the membrane lipid bilayer. May participate in the regulation of osmotic pressure changes within the cell. In Bacillus cereus (strain G9842), this protein is Large-conductance mechanosensitive channel.